The following is a 69-amino-acid chain: Sec-independent protein translocase protein TatA (69 aa).

Residues Met-1–Gly-21 traverse the membrane as a helical segment.

The protein belongs to the TatA/E family. In terms of assembly, the Tat system comprises two distinct complexes: a TatABC complex, containing multiple copies of TatA, TatB and TatC subunits, and a separate TatA complex, containing only TatA subunits. Substrates initially bind to the TatABC complex, which probably triggers association of the separate TatA complex to form the active translocon.

The protein resides in the cell inner membrane. In terms of biological role, part of the twin-arginine translocation (Tat) system that transports large folded proteins containing a characteristic twin-arginine motif in their signal peptide across membranes. TatA could form the protein-conducting channel of the Tat system. The protein is Sec-independent protein translocase protein TatA of Vesicomyosocius okutanii subsp. Calyptogena okutanii (strain HA).